Consider the following 126-residue polypeptide: Mating-type protein A1 (126 aa).

Residues 70 to 126 (SPKGKSSISPQARAFLEQVFRRKQSLNSKEKEEVAKKCGITPLQVRVWFINKRMRSK) constitute a DNA-binding region (homeobox).

Belongs to the MATA1 family. As to quaternary structure, binds DNA with a high specificity as a heterodimer of A1 and ALPHA2.

The protein localises to the nucleus. Functionally, mating type proteins are sequence specific DNA-binding proteins that act as master switches in yeast differentiation by controlling gene expression in a cell type-specific fashion. Transcriptional corepressor that, in a/alpha diploid cells, binds cooperatively with the ALPHA2 protein to a 21-bp DNA sequence termed the haploid-specific gene (hsg) operator, to repress transcription of haploid-specific genes and of MATALPHA1. This chain is Mating-type protein A1 (MATA1), found in Saccharomyces cerevisiae (Baker's yeast).